We begin with the raw amino-acid sequence, 551 residues long: Pentatricopeptide repeat-containing protein At3g13150 (551 aa).

Residues 22 to 67 (ATAKSAKPRSQTKSTKFPSKLKASTASVGDGGQSSNDAKDSKNSKL) are disordered. A compositionally biased stretch (polar residues) spans 29 to 48 (PRSQTKSTKFPSKLKASTAS). The span at 58–67 (DAKDSKNSKL) shows a compositional bias: basic and acidic residues. 7 PPR repeats span residues 121-155 (SEDF…NCER), 156-191 (TVKS…GITP), 192-226 (DLVT…GFEP), 227-261 (DLIS…NLSP), 262-296 (NIRS…GISP), 297-331 (DVHT…GLTP), and 332-366 (DTVT…KLLS). Disordered stretches follow at residues 409–435 (GKKK…SPDT) and 449–551 (SSSD…LLDD). A compositionally biased stretch (low complexity) spans 415–435 (SSPVSSSAKTTSTPVSSSPDT).

The protein belongs to the PPR family. P subfamily.

This Arabidopsis thaliana (Mouse-ear cress) protein is Pentatricopeptide repeat-containing protein At3g13150.